Reading from the N-terminus, the 152-residue chain is SKP1-like protein 11 (152 aa).

The interval 94–152 (ILAANYLNIKSLLDLTCQTVADMIKGKTPEEIRSTFNIENDFTPEEEEAVRKENQWAFE) is interaction with the F-box domain of F-box proteins.

It belongs to the SKP1 family. Part of a SCF (SKP1-cullin-F-box) protein ligase complex. Interacts with ADO3/FKF1, COI1/FBL2, EBF1/FBL6, PP2A13, PP2B10, UFO, SKIP2, SKIP15, SKIP16, SKIP32, CPR1/CPR30, At1g55000, At1g67340, At1g78100, At3g04660, At3g16740, At3g61590, At4g38940 and At5g49610. In terms of tissue distribution, expressed in young seedlings, cotyledons, roots, leaves, floral stems, inflorescences, pollen, and siliques, with a slightly higher level in inflorescence than in other tissues.

The protein localises to the nucleus. Its pathway is protein modification; protein ubiquitination. In terms of biological role, involved in ubiquitination and subsequent proteasomal degradation of target proteins. Together with CUL1, RBX1 and a F-box protein, it forms a SCF E3 ubiquitin ligase complex. The functional specificity of this complex depends on the type of F-box protein. In the SCF complex, it serves as an adapter that links the F-box protein to CUL1. Plays a role during early flowers reproductive development. This is SKP1-like protein 11 (ASK11) from Arabidopsis thaliana (Mouse-ear cress).